A 141-amino-acid chain; its full sequence is uncharacterized protein (141 aa).

The next 4 helical transmembrane spans lie at 7-27, 47-67, 75-95, and 106-126; these read VAIM…AASL, SAVG…MLGV, AVLC…ILMF, and VIFV…WFVA.

The protein localises to the cell membrane. This is an uncharacterized protein from Bacillus subtilis (strain 168).